The chain runs to 197 residues: Dephospho-CoA kinase (197 aa).

The DPCK domain maps to 2–197 (IIGITGGIAS…SALLLLANPR (196 aa)). ATP is bound at residue 10-15 (ASGKST).

The protein belongs to the CoaE family.

The protein localises to the cytoplasm. The catalysed reaction is 3'-dephospho-CoA + ATP = ADP + CoA + H(+). Its pathway is cofactor biosynthesis; coenzyme A biosynthesis; CoA from (R)-pantothenate: step 5/5. Catalyzes the phosphorylation of the 3'-hydroxyl group of dephosphocoenzyme A to form coenzyme A. In Streptococcus pyogenes serotype M1, this protein is Dephospho-CoA kinase.